Reading from the N-terminus, the 609-residue chain is Pescadillo homolog (609 aa).

One can recognise a BRCT domain in the interval lysine 320–isoleucine 413. Disordered regions lie at residues aspartate 443–phenylalanine 462 and alanine 488–alanine 609. 2 stretches are compositionally biased toward basic and acidic residues: residues glutamate 444–glycine 453 and alanine 488–glutamine 498. A coiled-coil region spans residues phenylalanine 481–glutamate 509. Over residues alanine 499–glutamine 512 the composition is skewed to acidic residues. 2 stretches are compositionally biased toward basic and acidic residues: residues aspartate 513 to glutamine 524 and valine 533 to arginine 552. Positions lysine 539–isoleucine 607 form a coiled coil. Basic residues predominate over residues lysine 554–tyrosine 564. Residues leucine 567–alanine 609 show a composition bias toward basic and acidic residues.

It belongs to the pescadillo family.

Its subcellular location is the nucleus. The protein resides in the nucleolus. It localises to the nucleoplasm. Its function is as follows. Required for maturation of ribosomal RNAs and formation of the large ribosomal subunit. In Aedes aegypti (Yellowfever mosquito), this protein is Pescadillo homolog.